A 349-amino-acid chain; its full sequence is MKKTPLYEAHLRLGARMVDFAGYLLPLQYTSIVEEHLAVRRAVGVFDVSHMGEFLVRGKEALAFLQWATANDAGKLKVGRAQYSMLPNERGGVVDDIYLYRLGEEEYLMVVNAANIAKDLAHLQALAKGFRVELEDASERTALLALQGPKAASLLQGLTDLDLSQKRKNDVFPARVAGRPARLARTGYTGEDGFELFLAPEDAEPVFLALVEAGAKPAGLGARDSLRLEAGFPLYGHELTEETNPLCTPWAWVVKKEKAFLGKEAMLAQACRERLVGLVLEGGIPREGYRVLSGGRPVGRVTSGGYSPLLQRGIALAYVEEGAEGPFQVEVRGRAVPAALSPLPFVPLK.

Belongs to the GcvT family. In terms of assembly, the glycine cleavage system is composed of four proteins: P, T, L and H.

It carries out the reaction N(6)-[(R)-S(8)-aminomethyldihydrolipoyl]-L-lysyl-[protein] + (6S)-5,6,7,8-tetrahydrofolate = N(6)-[(R)-dihydrolipoyl]-L-lysyl-[protein] + (6R)-5,10-methylene-5,6,7,8-tetrahydrofolate + NH4(+). The glycine cleavage system catalyzes the degradation of glycine. In Thermus thermophilus (strain ATCC 27634 / DSM 579 / HB8), this protein is Aminomethyltransferase.